The primary structure comprises 561 residues: MEKILVTLSTGAASIAVLAVLFTIPSLYNTINEVHDEVLDGVSVFRVETDSAWTEMMDIQITVTPPTKPRVNPFNSIFRQKRQTFSGLPAWCQCEPTKPTCPPGPPGPPGQPGQPGTPGAPGPKGEDNTSTYAPITCAPVSQDCVKCPQGPAGPEGPAGPAGPAGPDGQPGAPGNAGNPGSDGQPGAPGDDGQPGAPGQDGQPGAPGQDGQRGSGAPGAPGAPGNAGPAGPAGQDGAPGQDGQPGPAGPAGQDGAPGNAGSDGQPGAPGGPGLPGNDAAYCACPHGEDSCDHLYRSCLPRCFGEVLDGVSVFRVETDSAWTEMMDIQVTVTPPTKPRVNPFNSVFRQKRQTFSGLPAWCQCEPTKPTCPPGPPGPPGQPGQPGTPGAPGPKGEDNTATYAPITCAPVSQDCVKCPQGPAGPTGPAGLAGPAGPDGQPGFPGQRGNDGFPGAPGAPGDNGQPGAPGQDGFPGQPGADGQRGSGAPGAPGAPGNAGPAGPAGQDGFPGQDGQPGPAGPAGQDGFPGNAGSDGQPGAPGGPGLPGNDAAYCACPPRSAVFLSRH.

The signal sequence occupies residues 1-30; it reads MEKILVTLSTGAASIAVLAVLFTIPSLYNT. Positions 100-112 are enriched in pro residues; the sequence is TCPPGPPGPPGQP. 4 disordered regions span residues 100–134, 148–271, 367–398, and 422–540; these read TCPP…TYAP, PQGP…PGGP, TCPP…NTAT, and TGPA…GPGL. Triple-helical region stretches follow at residues 102–127 and 153–276; these read PPGP…KGED and GPEG…LPGN. 2 stretches are compositionally biased toward low complexity: residues 164–209 and 219–265; these read AGPD…PGQD and APGA…DGQP. Residues 367–379 are compositionally biased toward pro residues; that stretch reads TCPPGPPGPPGQP. Positions 413–544 are triple-helical region; sequence KCPQGPAGPT…PGGPGLPGND (132 aa). Low complexity-rich tracts occupy residues 422–467 and 486–532; these read TGPA…PGQD and APGA…DGQP. Residues 485–543 enclose the Collagen-like domain; it reads GAPGAPGNAGPAGPAGQDGFPGQDGQPGPAGPAGQDGFPGNAGSDGQPGAPGGPGLPGN.

It belongs to the cuticular collagen family. As to quaternary structure, collagen polypeptide chains are complexed within the cuticle by disulfide bonds and other types of covalent cross-links.

In terms of biological role, nematode cuticles are composed largely of collagen-like proteins. The cuticle functions both as an exoskeleton and as a barrier to protect the worm from its environment. The chain is Putative cuticle collagen 145 from Caenorhabditis briggsae.